Reading from the N-terminus, the 370-residue chain is Queuine tRNA-ribosyltransferase (370 aa).

D89 serves as the catalytic Proton acceptor. Substrate contacts are provided by residues 89–93 (DSGGF), D143, Q185, and G212. The segment at 243 to 249 (GVGKPED) is RNA binding. The active-site Nucleophile is D262. Residues 267-271 (TRNAR) are RNA binding; important for wobble base 34 recognition. 4 residues coordinate Zn(2+): C300, C302, C305, and H331.

This sequence belongs to the queuine tRNA-ribosyltransferase family. As to quaternary structure, homodimer. Within each dimer, one monomer is responsible for RNA recognition and catalysis, while the other monomer binds to the replacement base PreQ1. The cofactor is Zn(2+).

The catalysed reaction is 7-aminomethyl-7-carbaguanine + guanosine(34) in tRNA = 7-aminomethyl-7-carbaguanosine(34) in tRNA + guanine. Its pathway is tRNA modification; tRNA-queuosine biosynthesis. Functionally, catalyzes the base-exchange of a guanine (G) residue with the queuine precursor 7-aminomethyl-7-deazaguanine (PreQ1) at position 34 (anticodon wobble position) in tRNAs with GU(N) anticodons (tRNA-Asp, -Asn, -His and -Tyr). Catalysis occurs through a double-displacement mechanism. The nucleophile active site attacks the C1' of nucleotide 34 to detach the guanine base from the RNA, forming a covalent enzyme-RNA intermediate. The proton acceptor active site deprotonates the incoming PreQ1, allowing a nucleophilic attack on the C1' of the ribose to form the product. After dissociation, two additional enzymatic reactions on the tRNA convert PreQ1 to queuine (Q), resulting in the hypermodified nucleoside queuosine (7-(((4,5-cis-dihydroxy-2-cyclopenten-1-yl)amino)methyl)-7-deazaguanosine). This chain is Queuine tRNA-ribosyltransferase, found in Pseudoalteromonas atlantica (strain T6c / ATCC BAA-1087).